The primary structure comprises 677 residues: O-fucosyltransferase 27 (677 aa).

Residues 15 to 35 (WIGLLGLVLSAFSLLVHFLLA) form a helical; Signal-anchor for type II membrane protein membrane-spanning segment. N-linked (GlcNAc...) asparagine glycosylation occurs at Asn-130. The tract at residues 410 to 437 (PPSIEVETKHDSLKSTRQRPQPLPPPPA) is disordered. N-linked (GlcNAc...) asparagine glycans are attached at residues Asn-542 and Asn-592. The segment at 619–677 (NAEKEEDLDEEDLSSSGLFFGHKESGGNNNGNNETVNSEANNKEEGQLEDQEELEGSER) is disordered. The span at 622 to 631 (KEEDLDEEDL) shows a compositional bias: acidic residues. Positions 644–658 (GGNNNGNNETVNSEA) are enriched in low complexity. N-linked (GlcNAc...) asparagine glycosylation occurs at Asn-651. Positions 665–677 (QLEDQEELEGSER) are enriched in acidic residues.

The protein belongs to the glycosyltransferase GT106 family.

It localises to the membrane. It functions in the pathway glycan metabolism. The sequence is that of O-fucosyltransferase 27 from Arabidopsis thaliana (Mouse-ear cress).